Consider the following 245-residue polypeptide: Nodulation protein G (245 aa).

11-35 provides a ligand contact to NAD(+); the sequence is VTGASGGIGEAIARVLHAQGAIVGL. Position 139 (Ser139) interacts with substrate. The active-site Proton acceptor is the Tyr152.

The protein belongs to the short-chain dehydrogenases/reductases (SDR) family.

Its function is as follows. Proposed to modify Nod factor fatty acyl chain. The protein is Nodulation protein G (nodG) of Rhizobium sp. (strain N33).